Consider the following 568-residue polypeptide: Phosphoribosylaminoimidazole carboxylase (568 aa).

Residues K110–T298 form the ATP-grasp domain. Position 138–193 (G138–A193) interacts with ATP.

In the C-terminal section; belongs to the AIR carboxylase family. Class I subfamily.

It catalyses the reaction 5-amino-1-(5-phospho-D-ribosyl)imidazole-4-carboxylate + H(+) = 5-amino-1-(5-phospho-beta-D-ribosyl)imidazole + CO2. It participates in purine metabolism; IMP biosynthesis via de novo pathway; 5-amino-1-(5-phospho-D-ribosyl)imidazole-4-carboxylate from 5-amino-1-(5-phospho-D-ribosyl)imidazole (carboxylase route): step 1/1. The protein is Phosphoribosylaminoimidazole carboxylase (ADE2) of Candida albicans (strain SC5314 / ATCC MYA-2876) (Yeast).